The primary structure comprises 481 residues: Zinc metalloproteinase/disintegrin (481 aa).

The N-terminal stretch at 1–20 (MIQVLLVTICLAVFPYQGSS) is a signal peptide. A propeptide spanning residues 21-190 (IILESGNVDD…KASQLYLTPE (170 aa)) is cleaved from the precursor. Positions 197–392 (RYIKLAIVVD…DNPQCILNAP (196 aa)) constitute a Peptidase M12B domain. 3 disulfide bridges follow: C308-C387, C349-C371, and C351-C354. H333 lines the Zn(2+) pocket. E334 is an active-site residue. The Zn(2+) site is built by H337 and H343. Residues 393–408 (LRTDTVSTPVSGNEFL) constitute a propeptide that is removed on maturation. Residues 400–481 (TPVSGNEFLE…ADCPRNGLYS (82 aa)) form the Disintegrin domain. Disulfide bonds link C414–C429, C416–C424, C423–C446, C437–C443, C442–C467, and C455–C474. A Cell attachment site motif is present at residues 459 to 461 (RGD).

The protein belongs to the venom metalloproteinase (M12B) family. P-II subfamily. P-IIa sub-subfamily. As to quaternary structure, monomer. Zn(2+) is required as a cofactor. In terms of tissue distribution, expressed by the venom gland.

It is found in the secreted. In terms of biological role, impairs hemostasis in the envenomed animal. Functionally, inhibits platelet aggregation induced by ADP, thrombin, platelet-activating factor and collagen. Acts by inhibiting fibrinogen interaction with platelet receptors GPIIb/GPIIIa (ITGA2B/ITGB3). This Protobothrops elegans (Elegant pitviper) protein is Zinc metalloproteinase/disintegrin.